The primary structure comprises 349 residues: FK506-binding protein-like (349 aa).

The residue at position 3 (T3) is a Phosphothreonine. Residues 36 to 55 (RQQPRDPPTETLELEVSPDP) form a disordered region. TPR repeat units follow at residues 210 to 243 (AREE…LLTL), 252 to 285 (TVLH…EPGH), and 286 to 319 (LKAL…DPKN).

Forms a ternary complex with CDKN1A/p21 and HSP90AB1/Hsp90. In terms of tissue distribution, ubiquitously expressed with higher levels in testis.

May be involved in response to X-ray. Regulates p21 protein stability by binding to Hsp90 and p21. In Homo sapiens (Human), this protein is FK506-binding protein-like (FKBPL).